We begin with the raw amino-acid sequence, 503 residues long: Probable cytosol aminopeptidase (503 aa).

Mn(2+) is bound by residues Lys-270 and Asp-275. Residue Lys-282 is part of the active site. Mn(2+) contacts are provided by Asp-293, Asp-352, and Glu-354. Residue Arg-356 is part of the active site.

This sequence belongs to the peptidase M17 family. The cofactor is Mn(2+).

It localises to the cytoplasm. It carries out the reaction Release of an N-terminal amino acid, Xaa-|-Yaa-, in which Xaa is preferably Leu, but may be other amino acids including Pro although not Arg or Lys, and Yaa may be Pro. Amino acid amides and methyl esters are also readily hydrolyzed, but rates on arylamides are exceedingly low.. It catalyses the reaction Release of an N-terminal amino acid, preferentially leucine, but not glutamic or aspartic acids.. Functionally, presumably involved in the processing and regular turnover of intracellular proteins. Catalyzes the removal of unsubstituted N-terminal amino acids from various peptides. This is Probable cytosol aminopeptidase from Salmonella arizonae (strain ATCC BAA-731 / CDC346-86 / RSK2980).